The sequence spans 259 residues: Phosphatidylserine decarboxylase proenzyme (259 aa).

Active-site charge relay system; for autoendoproteolytic cleavage activity residues include aspartate 86, histidine 142, and serine 226. Serine 226 acts as the Schiff-base intermediate with substrate; via pyruvic acid; for decarboxylase activity in catalysis. Position 226 is a pyruvic acid (Ser); by autocatalysis (serine 226).

Belongs to the phosphatidylserine decarboxylase family. PSD-B subfamily. Prokaryotic type I sub-subfamily. In terms of assembly, heterodimer of a large membrane-associated beta subunit and a small pyruvoyl-containing alpha subunit. Pyruvate serves as cofactor. Is synthesized initially as an inactive proenzyme. Formation of the active enzyme involves a self-maturation process in which the active site pyruvoyl group is generated from an internal serine residue via an autocatalytic post-translational modification. Two non-identical subunits are generated from the proenzyme in this reaction, and the pyruvate is formed at the N-terminus of the alpha chain, which is derived from the carboxyl end of the proenzyme. The autoendoproteolytic cleavage occurs by a canonical serine protease mechanism, in which the side chain hydroxyl group of the serine supplies its oxygen atom to form the C-terminus of the beta chain, while the remainder of the serine residue undergoes an oxidative deamination to produce ammonia and the pyruvoyl prosthetic group on the alpha chain. During this reaction, the Ser that is part of the protease active site of the proenzyme becomes the pyruvoyl prosthetic group, which constitutes an essential element of the active site of the mature decarboxylase.

The protein localises to the cell membrane. It catalyses the reaction a 1,2-diacyl-sn-glycero-3-phospho-L-serine + H(+) = a 1,2-diacyl-sn-glycero-3-phosphoethanolamine + CO2. It functions in the pathway phospholipid metabolism; phosphatidylethanolamine biosynthesis; phosphatidylethanolamine from CDP-diacylglycerol: step 2/2. Functionally, catalyzes the formation of phosphatidylethanolamine (PtdEtn) from phosphatidylserine (PtdSer). The sequence is that of Phosphatidylserine decarboxylase proenzyme from Halalkalibacterium halodurans (strain ATCC BAA-125 / DSM 18197 / FERM 7344 / JCM 9153 / C-125) (Bacillus halodurans).